A 426-amino-acid polypeptide reads, in one-letter code: Mediator of RNA polymerase II transcription subunit 4 (426 aa).

The segment at 1-56 (MLQHQIVQSPARLGLTGPGSPSVQNPTPTRHGHPTSSSSSQSQHQQIQQQPNLLPS) is disordered. The span at 19–28 (GSPSVQNPTP) shows a compositional bias: polar residues. Low complexity predominate over residues 36–56 (SSSSSQSQHQQIQQQPNLLPS). A coiled-coil region spans residues 160–212 (TELQEILDLQDAKQKVAREIKSKDSSLLAFANKLKDAERVLDMLVDDYSDYRK). 2 disordered regions span residues 214–236 (KRSK…STTV) and 373–426 (IAAP…DDED). Positions 406-426 (ILEDDDSSDYSSDDASSDDED) are enriched in acidic residues.

Belongs to the Mediator complex subunit 4 family. As to quaternary structure, component of the Mediator complex.

Its subcellular location is the nucleus. Functionally, component of the Mediator complex, a coactivator involved in the regulated transcription of nearly all RNA polymerase II-dependent genes. Mediator functions as a bridge to convey information from gene-specific regulatory proteins to the basal RNA polymerase II transcription machinery. The Mediator complex, having a compact conformation in its free form, is recruited to promoters by direct interactions with regulatory proteins and serves for the assembly of a functional preinitiation complex with RNA polymerase II and the general transcription factors. This Arabidopsis thaliana (Mouse-ear cress) protein is Mediator of RNA polymerase II transcription subunit 4 (MED4).